The chain runs to 322 residues: Acetyl-coenzyme A carboxylase carboxyl transferase subunit beta (322 aa).

A CoA carboxyltransferase N-terminal domain is found at 24-293; the sequence is LWIKCPDTGQ…PAVEEIAASD (270 aa).

The protein belongs to the AccD/PCCB family. In terms of assembly, acetyl-CoA carboxylase is a heterohexamer composed of biotin carboxyl carrier protein (AccB), biotin carboxylase (AccC) and two subunits each of ACCase subunit alpha (AccA) and ACCase subunit beta (AccD).

It localises to the cytoplasm. The catalysed reaction is N(6)-carboxybiotinyl-L-lysyl-[protein] + acetyl-CoA = N(6)-biotinyl-L-lysyl-[protein] + malonyl-CoA. The protein operates within lipid metabolism; malonyl-CoA biosynthesis; malonyl-CoA from acetyl-CoA: step 1/1. Functionally, component of the acetyl coenzyme A carboxylase (ACC) complex. Biotin carboxylase (BC) catalyzes the carboxylation of biotin on its carrier protein (BCCP) and then the CO(2) group is transferred by the transcarboxylase to acetyl-CoA to form malonyl-CoA. The protein is Acetyl-coenzyme A carboxylase carboxyl transferase subunit beta of Rhodopseudomonas palustris (strain BisB5).